A 335-amino-acid polypeptide reads, in one-letter code: Large ribosomal subunit protein uL3 (335 aa).

Residues 1-20 (MATIHRPRRGSLAFSPRKRA) form a disordered region.

The protein belongs to the universal ribosomal protein uL3 family. Part of the 50S ribosomal subunit. Forms a cluster with proteins L14 and L24e.

Functionally, one of the primary rRNA binding proteins, it binds directly near the 3'-end of the 23S rRNA, where it nucleates assembly of the 50S subunit. This Methanothrix thermoacetophila (strain DSM 6194 / JCM 14653 / NBRC 101360 / PT) (Methanosaeta thermophila) protein is Large ribosomal subunit protein uL3.